Here is a 457-residue protein sequence, read N- to C-terminus: Transcription factor PCF7 (457 aa).

Positions serine 58–glutamine 84 form a coiled coil. Positions arginine 95–valine 121 are disordered. A compositionally biased stretch (gly residues) spans glycine 101–serine 115. Positions arginine 140–leucine 198 constitute a TCP domain. Disordered stretches follow at residues proline 199–asparagine 231 and lysine 263–glutamine 299. Residues serine 212 to glycine 230 are compositionally biased toward polar residues. Over residues serine 268 to alanine 278 the composition is skewed to low complexity.

As to quaternary structure, forms homodimers and heterodimers.

It localises to the nucleus. Transcription activator. Binds the promoter core sequence 5'-GGNCC-3'. In Oryza sativa subsp. indica (Rice), this protein is Transcription factor PCF7 (PCF7).